Consider the following 106-residue polypeptide: Large ribosomal subunit protein uL23 (106 aa).

Belongs to the universal ribosomal protein uL23 family. As to quaternary structure, part of the 50S ribosomal subunit. Contacts protein L29, and trigger factor when it is bound to the ribosome.

One of the early assembly proteins it binds 23S rRNA. One of the proteins that surrounds the polypeptide exit tunnel on the outside of the ribosome. Forms the main docking site for trigger factor binding to the ribosome. The protein is Large ribosomal subunit protein uL23 of Neisseria meningitidis serogroup C / serotype 2a (strain ATCC 700532 / DSM 15464 / FAM18).